We begin with the raw amino-acid sequence, 315 residues long: Glutamyl-Q tRNA(Asp) synthetase (315 aa).

L-glutamate is bound by residues 21–25 (RFAPS) and E63. The short motif at 24–34 (PSPSGLLHFGS) is the 'HIGH' region element. 4 residues coordinate Zn(2+): C119, C121, Y133, and C137. Y190 and R208 together coordinate L-glutamate. Positions 251 to 255 (KLSKQ) match the 'KMSKS' region motif. K254 contributes to the ATP binding site.

The protein belongs to the class-I aminoacyl-tRNA synthetase family. GluQ subfamily. The cofactor is Zn(2+).

Functionally, catalyzes the tRNA-independent activation of glutamate in presence of ATP and the subsequent transfer of glutamate onto a tRNA(Asp). Glutamate is transferred on the 2-amino-5-(4,5-dihydroxy-2-cyclopenten-1-yl) moiety of the queuosine in the wobble position of the QUC anticodon. This chain is Glutamyl-Q tRNA(Asp) synthetase, found in Colwellia psychrerythraea (strain 34H / ATCC BAA-681) (Vibrio psychroerythus).